Reading from the N-terminus, the 43-residue chain is MGYTDTRDLREHIFECGVAKKFSFTCKCLREVIQHYEQFSRKA.

This is an uncharacterized protein from Escherichia coli (Bacteriophage T4).